The sequence spans 212 residues: MTDLSDIRREYAKGGLRRADLPQNPMDLFELWMTQARDAELSDPTAMCVATVDEHGQPFQRIVLLKRFDDTGFVFFTNLGSRKAQQIAANNKVSLHFPWHPLERQVSVLGEAQALSTAEVLKYFMTRPKDSQIAAWVSQQSSKLSARQVLEGKFFEMKAKFAKGDVPLPSFWGGYLVRPSSIEFWQGGEHRLHDRFIYTRHDAEWEIDRLAP.

Substrate-binding positions include 8–11 (RREY) and Lys66. Residues 61-66 (RIVLLK), 76-77 (FT), Arg82, Lys83, and Gln105 each bind FMN. Tyr123, Arg127, and Ser131 together coordinate substrate. FMN contacts are provided by residues 140–141 (QS) and Trp185. 191–193 (RLH) provides a ligand contact to substrate. FMN is bound at residue Arg195.

Belongs to the pyridoxamine 5'-phosphate oxidase family. As to quaternary structure, homodimer. FMN serves as cofactor.

The catalysed reaction is pyridoxamine 5'-phosphate + O2 + H2O = pyridoxal 5'-phosphate + H2O2 + NH4(+). It catalyses the reaction pyridoxine 5'-phosphate + O2 = pyridoxal 5'-phosphate + H2O2. It participates in cofactor metabolism; pyridoxal 5'-phosphate salvage; pyridoxal 5'-phosphate from pyridoxamine 5'-phosphate: step 1/1. The protein operates within cofactor metabolism; pyridoxal 5'-phosphate salvage; pyridoxal 5'-phosphate from pyridoxine 5'-phosphate: step 1/1. Its function is as follows. Catalyzes the oxidation of either pyridoxine 5'-phosphate (PNP) or pyridoxamine 5'-phosphate (PMP) into pyridoxal 5'-phosphate (PLP). The chain is Pyridoxine/pyridoxamine 5'-phosphate oxidase from Shewanella baltica (strain OS155 / ATCC BAA-1091).